A 101-amino-acid polypeptide reads, in one-letter code: Doublesex- and mab-3-related transcription factor 1 (101 aa).

Positions 1-13 (SLIAERQRVMAAQ) form a DNA-binding region, DM. A compositionally biased stretch (low complexity) spans 52–75 (CLLLESSSPTHSTSTVTTVSTSPS). Residues 52-79 (CLLLESSSPTHSTSTVTTVSTSPSEGRM) form a disordered region.

It belongs to the DMRT family.

The protein resides in the nucleus. Its function is as follows. May be required for testis development. This is Doublesex- and mab-3-related transcription factor 1 (DMRT1) from Alligator mississippiensis (American alligator).